Here is a 525-residue protein sequence, read N- to C-terminus: MGWLFLKVLLVGMAFSGFFYPLVDFSISGKTRAPQPNIVIILADDMGWGDLGANWAETKDTTNLDKMASEGMRFVDFHAAASTCSPSRASLLTGRLGLRNGVTHNFAVTSVGGLPVNETTLAEVLRQEGYVTAMIGKWHLGHHGSYHPNFRGFDYYFGIPYSNDMGCTDAPGYNYPPCPACPQRDGLWRNPGRDCYTDVALPLYENLNIVEQPVNLSGLAQKYAERAVEFIEQASTSGRPFLLYVGLAHMHVPLSVTPPLAHPQRQSLYRASLREMDSLVGQIKDKVDHVARENTLLWFTGDNGPWAQKCELAGSVGPFFGLWQTHQGGSPTKQTTWEGGHRVPALAYWPGRVPANVTSTALLSLLDIFPTVIALAGASLPPNRKFDGRDVSEVLFGKSQMGHRVLFHPNSGAAGEYGALQTVRLNHYKAFYITGGAKACDGSVGPEQHHVAPLIFNLEDAADEGMPLQKGSPEYQEVLQQVTRALADVLQDIADDNSSRADYTQDPSVIPCCNPYQTTCRCQPV.

Positions 1–16 are cleaved as a signal peptide; that stretch reads MGWLFLKVLLVGMAFS. 3 residues coordinate Ca(2+): aspartate 44, aspartate 45, and cysteine 84. The active-site Nucleophile is the cysteine 84. 3-oxoalanine (Cys) is present on cysteine 84. An N-linked (GlcNAc...) asparagine glycan is attached at asparagine 117. Lysine 137 is a binding site for substrate. The active site involves histidine 139. Position 162 (serine 162) interacts with substrate. Asparagine 215 is a glycosylation site (N-linked (GlcNAc...) asparagine). Histidine 251 contacts substrate. Ca(2+) contacts are provided by aspartate 302 and asparagine 303. N-linked (GlcNAc...) asparagine glycans are attached at residues asparagine 356 and asparagine 497.

This sequence belongs to the sulfatase family. Ca(2+) is required as a cofactor. In terms of processing, N-glycosylated with both high mannose and complex type sugars. The conversion to 3-oxoalanine (also known as C-formylglycine, FGly), of a serine or cysteine residue in prokaryotes and of a cysteine residue in eukaryotes, is critical for catalytic activity. Post-translationally, the 63-kDa precursor undergoes proteolytic processing in two steps, yielding two fragments in the first step (apparent molecular masses of 44 and 18 kDa). In the second step, the 44-kDa fragment is processed further to the 34- and 10-kDa chains. The 10-kDa chain is a cleavage product of the 44-kDa fragment but linked to the 18-kDa chain through a disulfide bridge. As to expression, highly expressed in the spleen, kidney, liver, brain, and testis (at protein level).

The protein resides in the lysosome. The catalysed reaction is an aryl sulfate + H2O = a phenol + sulfate + H(+). It catalyses the reaction Hydrolysis of the 3-sulfate groups of the N-sulfo-D-glucosamine 3-O-sulfate units of heparin.. Displays arylsulfatase activity at acidic pH towards the artificial substrate p-nitrocatechol sulfate. Catalyzes the hydrolysis of the 3-sulfate groups of the N-sulfo-D-glucosamine 3-O-sulfate units of heparin. This Mus musculus (Mouse) protein is Arylsulfatase G (Arsg).